A 436-amino-acid polypeptide reads, in one-letter code: Phosphomethylpyrimidine synthase (436 aa).

Residues N69, M98, Y127, H163, 185-187 (SRG), 226-229 (DACR), and E265 each bind substrate. H269 is a Zn(2+) binding site. Y292 provides a ligand contact to substrate. Zn(2+) is bound at residue H333. [4Fe-4S] cluster contacts are provided by C409, C412, and C416.

This sequence belongs to the ThiC family. [4Fe-4S] cluster serves as cofactor.

It carries out the reaction 5-amino-1-(5-phospho-beta-D-ribosyl)imidazole + S-adenosyl-L-methionine = 4-amino-2-methyl-5-(phosphooxymethyl)pyrimidine + CO + 5'-deoxyadenosine + formate + L-methionine + 3 H(+). The protein operates within cofactor biosynthesis; thiamine diphosphate biosynthesis. Its function is as follows. Catalyzes the synthesis of the hydroxymethylpyrimidine phosphate (HMP-P) moiety of thiamine from aminoimidazole ribotide (AIR) in a radical S-adenosyl-L-methionine (SAM)-dependent reaction. The polypeptide is Phosphomethylpyrimidine synthase (Clostridium perfringens (strain SM101 / Type A)).